Consider the following 464-residue polypeptide: Adenosylhomocysteinase (464 aa).

Substrate contacts are provided by T56, D131, and E190. 191 to 193 (TTT) is a binding site for NAD(+). K220 and D224 together coordinate substrate. NAD(+)-binding positions include N225, 254-259 (GFGDVG), E277, N312, 333-335 (IGH), and N378.

It belongs to the adenosylhomocysteinase family. It depends on NAD(+) as a cofactor.

The protein localises to the cytoplasm. It carries out the reaction S-adenosyl-L-homocysteine + H2O = L-homocysteine + adenosine. The protein operates within amino-acid biosynthesis; L-homocysteine biosynthesis; L-homocysteine from S-adenosyl-L-homocysteine: step 1/1. Functionally, may play a key role in the regulation of the intracellular concentration of adenosylhomocysteine. This Zymomonas mobilis subsp. mobilis (strain ATCC 31821 / ZM4 / CP4) protein is Adenosylhomocysteinase.